Reading from the N-terminus, the 285-residue chain is Ribosomal protein L11 methyltransferase (285 aa).

Residues Thr131, Gly154, Asp176, and Asn223 each contribute to the S-adenosyl-L-methionine site.

The protein belongs to the methyltransferase superfamily. PrmA family.

Its subcellular location is the cytoplasm. It catalyses the reaction L-lysyl-[protein] + 3 S-adenosyl-L-methionine = N(6),N(6),N(6)-trimethyl-L-lysyl-[protein] + 3 S-adenosyl-L-homocysteine + 3 H(+). Methylates ribosomal protein L11. The protein is Ribosomal protein L11 methyltransferase of Brucella melitensis biotype 2 (strain ATCC 23457).